A 245-amino-acid chain; its full sequence is tRNA pseudouridine synthase A (245 aa).

Residue aspartate 52 is the Nucleophile of the active site. Tyrosine 111 is a substrate binding site.

This sequence belongs to the tRNA pseudouridine synthase TruA family. Homodimer.

The enzyme catalyses uridine(38/39/40) in tRNA = pseudouridine(38/39/40) in tRNA. Functionally, formation of pseudouridine at positions 38, 39 and 40 in the anticodon stem and loop of transfer RNAs. The chain is tRNA pseudouridine synthase A from Rickettsia akari (strain Hartford).